We begin with the raw amino-acid sequence, 229 residues long: Small ribosomal subunit protein uS3 (229 aa).

The KH type-2 domain maps to 38-106 (IREYIENKLF…KVHINVMEVK (69 aa)). The segment covering 208–217 (PEVDENEETK) has biased composition (acidic residues). Positions 208–229 (PEVDENEETKEENKEKSEEKSE) are disordered. Residues 218–229 (EENKEKSEEKSE) are compositionally biased toward basic and acidic residues.

It belongs to the universal ribosomal protein uS3 family. In terms of assembly, part of the 30S ribosomal subunit. Forms a tight complex with proteins S10 and S14.

Binds the lower part of the 30S subunit head. Binds mRNA in the 70S ribosome, positioning it for translation. This is Small ribosomal subunit protein uS3 from Natranaerobius thermophilus (strain ATCC BAA-1301 / DSM 18059 / JW/NM-WN-LF).